We begin with the raw amino-acid sequence, 571 residues long: Protein PNS1 (571 aa).

The tract at residues 1-96 (MNDEEKHLAA…PDFPPDYNYK (96 aa)) is disordered. At 1–118 (MNDEEKHLAA…AVPKPKWNDK (118 aa)) the chain is on the cytoplasmic side. Over residues 15–31 (YQPNMHYQQQQEKQTGY) the composition is skewed to polar residues. Low complexity-rich tracts occupy residues 39–52 (QGGY…DYYN) and 71–80 (GNPNDNYNNQ). Pro residues predominate over residues 81–90 (QPPPYTPDFP). Residues 119–139 (IGLVILALIFSGYLALSIIVI) form a helical membrane-spanning segment. Residues 140-166 (RAYAQTHSFQGWGIYSGENDYSLNTHT) are Extracellular-facing. A helical transmembrane segment spans residues 167 to 187 (LILYAFVLATAMVLSLLYFIA). The Cytoplasmic portion of the chain corresponds to 188–189 (AR). A helical membrane pass occupies residues 190–210 (VWTKQFIWITYILHLLFSWGT). Position 211 (Ala211) is a topological domain, extracellular. A helical transmembrane segment spans residues 212–232 (IYYLVVGYYSAGIVFIVFAAL). The Cytoplasmic portion of the chain corresponds to 233 to 263 (TTWWFWCSRKRIPFATIVLQTLIDVTRANPS). The chain crosses the membrane as a helical span at residues 264-284 (VLVISAVGTVVGACFGTWFSF). Over 285-311 (TIVSIYVKYDPDNRNPGCMTTGGSCSN) the chain is Extracellular. A helical membrane pass occupies residues 312–332 (GKLIGLILFAIFCGYYLTEVI). Topologically, residues 333–369 (KNVIHVTISGVYGSWYYCSKSDQGMPKHAAMSSFRRA) are cytoplasmic. The chain crosses the membrane as a helical span at residues 370-390 (VTYSLGSISLGSLIVSIINFI). Topologically, residues 391 to 406 (RQILSVLQQDARQSGD) are extracellular. A helical transmembrane segment spans residues 407–427 (TLATVLLCFVQCCFGVLDWLV). Residues 428–472 (TYFNHYAYSYIALYGKAYVPSAKATWKLMQTRGIDAMVNDSLIGS) lie on the Cytoplasmic side of the membrane. The chain crosses the membrane as a helical span at residues 473 to 493 (VLSFGASFVAYAAALVAYCFL). Over 494-503 (KYTDPSYNSG) the chain is Extracellular. A helical membrane pass occupies residues 504–524 (GGFYAPVVGLAFVIALQVSNI). Residues 525–571 (TNVSLKSGCSTFFLALARDPEVLRVSYPQIYEEICRTYPPARDKLDI) are Cytoplasmic-facing.

The protein belongs to the CTL (choline transporter-like) family.

It is found in the cell membrane. Functionally, probably involved in transport through the plasma membrane. This chain is Protein PNS1 (PNS1), found in Yarrowia lipolytica (strain CLIB 122 / E 150) (Yeast).